Consider the following 427-residue polypeptide: ATP-sensitive inward rectifier potassium channel 12 (427 aa).

Over 1 to 77 (MTAASRANPY…LADMFTTCVD (77 aa)) the chain is Cytoplasmic. C75 is subject to S-nitrosocysteine. A helical membrane pass occupies residues 78 to 104 (IRWRYMLLIFSLAFLASWLLFGIIFWV). 2 residues coordinate a 1,2-diacyl-sn-glycero-3-phospho-(1D-myo-inositol-4,5-bisphosphate): R79 and R81. The Extracellular portion of the chain corresponds to 105-129 (IAVAHGDLEPAEGRGRTPCVLQVHG). A disulfide bridge links C123 with C155. The segment at residues 130-146 (FMAAFLFSIETQTTIGY) is an intramembrane region (helical; Pore-forming). Positions 143, 144, 145, and 146 each coordinate K(+). Positions 143 to 148 (TIGYGL) match the Selectivity filter motif. Over 147 to 155 (GLRCVTEEC) the chain is Extracellular. Residues 156–183 (PVAVFMVVAQSIVGCIIDSFMIGAIMAK) traverse the membrane as a helical segment. A 1,2-diacyl-sn-glycero-3-phospho-(1D-myo-inositol-4,5-bisphosphate)-binding residues include K183 and K188. Residues 184–427 (MGRPKKRAQT…ERPYRRESEI (244 aa)) are Cytoplasmic-facing. The disordered stretch occupies residues 387–427 (DEEDEVATDRDGRSPQPEHDFDRLQASSGALERPYRRESEI). A compositionally biased stretch (basic and acidic residues) spans 393-409 (ATDRDGRSPQPEHDFDR). Residues 425–427 (SEI) carry the PDZ-binding motif.

The protein belongs to the inward rectifier-type potassium channel (TC 1.A.2.1) family. KCNJ12 subfamily. Homotetramer. Forms heteromer with KCNJ4. Can form heteromeric channels with Kir2.6/KCNJ18. Association, via its PDZ-recognition domain, with LIN7A, LIN7B, LIN7C, DLG1, CASK and APBA1 plays a key role in its localization and trafficking. In terms of tissue distribution, highest level in cerebellum. Moderately found in kidney, forebrain and skeletal muscle. Not detected in uterus, liver and pancreas.

Its subcellular location is the membrane. It localises to the cell membrane. It is found in the sarcolemma. The protein resides in the T-tubule. It carries out the reaction K(+)(in) = K(+)(out). Activated by phosphatidylinositol 4,5-biphosphate (PtdIns(4,5)P2). PtdIns(4,5)P2 binding to the cytoplasmic side of the channel triggers a conformation change leading to channel opening. Inhibited by Ba(2+). Its function is as follows. Inward rectifying potassium channel that probably participates in controlling the resting membrane potential in electrically excitable cells. It probably participates in establishing action potential waveform and excitability of neuronal and muscle tissues. Inward rectifier potassium channels are characterized by a greater tendency to allow potassium to flow into the cell rather than out of it. Their voltage dependence is regulated by the concentration of extracellular potassium; as external potassium is raised, the voltage range of the channel opening shifts to more positive voltages. The inward rectification is mainly due to the blockage of outward current by internal magnesium. This chain is ATP-sensitive inward rectifier potassium channel 12 (Kcnj12), found in Rattus norvegicus (Rat).